The primary structure comprises 281 residues: Diaminopimelate epimerase (281 aa).

Substrate-binding residues include Asn13, Gln51, and Asn70. Catalysis depends on Cys79, which acts as the Proton donor. Substrate is bound by residues 80–81 (GN), Asn163, Asn196, and 214–215 (ER). Residue Cys223 is the Proton acceptor of the active site. 224-225 (GS) serves as a coordination point for substrate.

This sequence belongs to the diaminopimelate epimerase family. As to quaternary structure, homodimer.

The protein resides in the cytoplasm. It carries out the reaction (2S,6S)-2,6-diaminopimelate = meso-2,6-diaminopimelate. It participates in amino-acid biosynthesis; L-lysine biosynthesis via DAP pathway; DL-2,6-diaminopimelate from LL-2,6-diaminopimelate: step 1/1. Functionally, catalyzes the stereoinversion of LL-2,6-diaminopimelate (L,L-DAP) to meso-diaminopimelate (meso-DAP), a precursor of L-lysine and an essential component of the bacterial peptidoglycan. The chain is Diaminopimelate epimerase from Alcanivorax borkumensis (strain ATCC 700651 / DSM 11573 / NCIMB 13689 / SK2).